A 147-amino-acid chain; its full sequence is Nucleoside diphosphate kinase (147 aa).

Residues K9, F57, R85, T91, R102, and N112 each coordinate ATP. H115 serves as the catalytic Pros-phosphohistidine intermediate.

It belongs to the NDK family. In terms of assembly, homotetramer. It depends on Mg(2+) as a cofactor.

The protein localises to the cytoplasm. The catalysed reaction is a 2'-deoxyribonucleoside 5'-diphosphate + ATP = a 2'-deoxyribonucleoside 5'-triphosphate + ADP. It carries out the reaction a ribonucleoside 5'-diphosphate + ATP = a ribonucleoside 5'-triphosphate + ADP. Functionally, major role in the synthesis of nucleoside triphosphates other than ATP. The ATP gamma phosphate is transferred to the NDP beta phosphate via a ping-pong mechanism, using a phosphorylated active-site intermediate. This Listeria innocua serovar 6a (strain ATCC BAA-680 / CLIP 11262) protein is Nucleoside diphosphate kinase.